A 1064-amino-acid polypeptide reads, in one-letter code: Phosphatidylinositol 4,5-bisphosphate 3-kinase catalytic subunit beta isoform (1064 aa).

Residues 20–109 (SDGAISVDFL…LPVLKLVTRS (90 aa)) form the PI3K-ABD domain. The region spanning 188–279 (GGKLVVAVHF…RTLPHFILVE (92 aa)) is the PI3K-RBD domain. Serine 318 carries the phosphoserine modification. Positions 323–490 (NNNPFQITLV…NATALHITFP (168 aa)) constitute a C2 PI3K-type domain. Positions 404–412 (KVKTKKSTK) match the Nuclear localization signal (NLS) motif. The 178-residue stretch at 518–695 (ANVSSRGGKK…GVILEAYCRG (178 aa)) folds into the PIK helical domain. One can recognise a PI3K/PI4K catalytic domain in the interval 766-1047 (YVEKCKYMDS…KFDEALRESW (282 aa)). Positions 772–778 (YMDSKMK) are G-loop. The catalytic loop stretch occupies residues 910–918 (GIGDRHSDN). The activation loop stretch occupies residues 929 to 955 (HIDFGHILGNFKSKFGIKRERVPFILT). Serine 1064 bears the Phosphoserine; by autocatalysis mark.

It belongs to the PI3/PI4-kinase family. In terms of assembly, heterodimer of a catalytic subunit PIK3CB and a p85 regulatory subunit (PIK3R1, PIK3R2 or PIK3R3). Interaction with PIK3R2 is required for nuclear localization and nuclear export. Part of a complex with PIK3R1 and PTEN. Binding to PTEN may antagonize the lipid kinase activity under normal growth conditions. Part of a complex involved in autophagosome formation composed of PIK3C3 and PIK3R4. Interacts with BECN1, ATG14 and RAB5A. Phosphorylation at Ser-1064 down-regulates lipid kinase activity. Post-translationally, autophosphorylation at Ser-1064 negatively regulates the phosphatidylinositol-4,5-bisphosphate 3-kinase activity.

The protein localises to the cytoplasm. Its subcellular location is the nucleus. It catalyses the reaction a 1,2-diacyl-sn-glycero-3-phospho-(1D-myo-inositol-4,5-bisphosphate) + ATP = a 1,2-diacyl-sn-glycero-3-phospho-(1D-myo-inositol-3,4,5-trisphosphate) + ADP + H(+). The catalysed reaction is 1-octadecanoyl-2-(5Z,8Z,11Z,14Z)-eicosatetraenoyl-sn-glycero-3-phospho-1D-myo-inositol 4,5-bisphosphate + ATP = 1-octadecanoyl-2-(5Z,8Z,11Z,14Z-eicosatetraenoyl)-sn-glycero-3-phospho-(1D-myo-inositol 3,4,5-triphosphate) + ADP + H(+). It carries out the reaction L-seryl-[protein] + ATP = O-phospho-L-seryl-[protein] + ADP + H(+). It participates in phospholipid metabolism; phosphatidylinositol phosphate biosynthesis. Phosphoinositide-3-kinase (PI3K) phosphorylates phosphatidylinositol (PI) derivatives at position 3 of the inositol ring to produce 3-phosphoinositides. Uses ATP and PtdIns(4,5)P2 (phosphatidylinositol 4,5-bisphosphate) to generate phosphatidylinositol 3,4,5-trisphosphate (PIP3). PIP3 plays a key role by recruiting PH domain-containing proteins to the membrane, including AKT1 and PDPK1, activating signaling cascades involved in cell growth, survival, proliferation, motility and morphology. Involved in the activation of AKT1 upon stimulation by G-protein coupled receptors (GPCRs) ligands such as CXCL12, sphingosine 1-phosphate, and lysophosphatidic acid. May also act downstream receptor tyrosine kinases. Required in different signaling pathways for stable platelet adhesion and aggregation. Plays a role in platelet activation signaling triggered by GPCRs, alpha-IIb/beta-3 integrins (ITGA2B/ ITGB3) and ITAM (immunoreceptor tyrosine-based activation motif)-bearing receptors such as GP6. Regulates the strength of adhesion of ITGA2B/ ITGB3 activated receptors necessary for the cellular transmission of contractile forces. Required for platelet aggregation induced by F2 (thrombin) and thromboxane A2 (TXA2). Has a role in cell survival. May have a role in cell migration. Involved in the early stage of autophagosome formation. Modulates the intracellular level of PtdIns3P (phosphatidylinositol 3-phosphate) and activates PIK3C3 kinase activity. May act as a scaffold, independently of its lipid kinase activity to positively regulate autophagy. May have a role in insulin signaling as scaffolding protein in which the lipid kinase activity is not required. May have a kinase-independent function in regulating cell proliferation and in clathrin-mediated endocytosis. Mediator of oncogenic signal in cell lines lacking PTEN. The lipid kinase activity is necessary for its role in oncogenic transformation. Required for the growth of ERBB2 and RAS driven tumors. Also has a protein kinase activity showing autophosphorylation. This is Phosphatidylinositol 4,5-bisphosphate 3-kinase catalytic subunit beta isoform (Pik3cb) from Mus musculus (Mouse).